The sequence spans 276 residues: Undecaprenyl-diphosphatase (276 aa).

8 helical membrane-spanning segments follow: residues 1-21, 39-59, 84-104, 115-135, 159-179, 190-210, 222-242, and 253-273; these read MSWL…FLPV, AGAS…LVYF, YRLG…GLLL, LWAI…AEYF, LALL…LFLG, FLLA…DAFA, QLLV…AWFL, and FVGY…TGVV.

This sequence belongs to the UppP family.

It is found in the cell membrane. It catalyses the reaction di-trans,octa-cis-undecaprenyl diphosphate + H2O = di-trans,octa-cis-undecaprenyl phosphate + phosphate + H(+). Catalyzes the dephosphorylation of undecaprenyl diphosphate (UPP). Confers resistance to bacitracin. The polypeptide is Undecaprenyl-diphosphatase (Mycobacterium sp. (strain KMS)).